Reading from the N-terminus, the 109-residue chain is MTAPKSKKSGDNVNAKLGLAIKSGKYTLGYKSTIKALRQGKAKLVIIAGNTPALRKSEIEYYAMLAKCTVHHFQGGNNELGTSCGRLFRVGAVTIMDAGDSDILTAELS.

It belongs to the eukaryotic ribosomal protein eL30 family.

The polypeptide is Large ribosomal subunit protein eL30 (RPL30) (Yarrowia lipolytica (strain CLIB 122 / E 150) (Yeast)).